We begin with the raw amino-acid sequence, 347 residues long: N-acetyl-gamma-glutamyl-phosphate reductase (347 aa).

The active site involves Cys152.

It belongs to the NAGSA dehydrogenase family. Type 1 subfamily.

Its subcellular location is the cytoplasm. It catalyses the reaction N-acetyl-L-glutamate 5-semialdehyde + phosphate + NADP(+) = N-acetyl-L-glutamyl 5-phosphate + NADPH + H(+). It functions in the pathway amino-acid biosynthesis; L-arginine biosynthesis; N(2)-acetyl-L-ornithine from L-glutamate: step 3/4. In terms of biological role, catalyzes the NADPH-dependent reduction of N-acetyl-5-glutamyl phosphate to yield N-acetyl-L-glutamate 5-semialdehyde. This chain is N-acetyl-gamma-glutamyl-phosphate reductase, found in Neisseria gonorrhoeae (strain ATCC 700825 / FA 1090).